The sequence spans 339 residues: Protein pelota homolog (339 aa).

Belongs to the eukaryotic release factor 1 family. Pelota subfamily. As to quaternary structure, monomer. A divalent metal cation is required as a cofactor.

The protein resides in the cytoplasm. Functionally, may function in recognizing stalled ribosomes, interact with stem-loop structures in stalled mRNA molecules, and effect endonucleolytic cleavage of the mRNA. May play a role in the release non-functional ribosomes and degradation of damaged mRNAs. Has endoribonuclease activity. The protein is Protein pelota homolog (pelA) of Thermoplasma acidophilum (strain ATCC 25905 / DSM 1728 / JCM 9062 / NBRC 15155 / AMRC-C165).